Consider the following 399-residue polypeptide: Formate-dependent phosphoribosylglycinamide formyltransferase (399 aa).

N(1)-(5-phospho-beta-D-ribosyl)glycinamide contacts are provided by residues 8 to 9 (EL) and E68. Residues R100, K141, 146–151 (SSGHGQ), 185–188 (EALA), and E193 each bind ATP. The ATP-grasp domain occupies 105–308 (VLAHEELGLP…EFALHARAIL (204 aa)). Mg(2+)-binding residues include E266 and E279. Residues D286, K361, and 368-369 (RR) contribute to the N(1)-(5-phospho-beta-D-ribosyl)glycinamide site.

The protein belongs to the PurK/PurT family. Homodimer.

It carries out the reaction N(1)-(5-phospho-beta-D-ribosyl)glycinamide + formate + ATP = N(2)-formyl-N(1)-(5-phospho-beta-D-ribosyl)glycinamide + ADP + phosphate + H(+). The protein operates within purine metabolism; IMP biosynthesis via de novo pathway; N(2)-formyl-N(1)-(5-phospho-D-ribosyl)glycinamide from N(1)-(5-phospho-D-ribosyl)glycinamide (formate route): step 1/1. In terms of biological role, involved in the de novo purine biosynthesis. Catalyzes the transfer of formate to 5-phospho-ribosyl-glycinamide (GAR), producing 5-phospho-ribosyl-N-formylglycinamide (FGAR). Formate is provided by PurU via hydrolysis of 10-formyl-tetrahydrofolate. In Bifidobacterium adolescentis (strain ATCC 15703 / DSM 20083 / NCTC 11814 / E194a), this protein is Formate-dependent phosphoribosylglycinamide formyltransferase.